Here is a 341-residue protein sequence, read N- to C-terminus: uncharacterized protein (341 aa).

This is an uncharacterized protein from Mycobacterium bovis (strain ATCC BAA-935 / AF2122/97).